We begin with the raw amino-acid sequence, 608 residues long: Chaperone protein DnaK (608 aa).

Thr-174 bears the Phosphothreonine; by autocatalysis mark. Positions 493–505 (YEEEDRKRKESAE) are enriched in basic and acidic residues. 2 disordered regions span residues 493-514 (YEEE…DSMV) and 577-608 (GQAA…DDDK). Low complexity predominate over residues 577–590 (GQAAGANPGAQTTG). The segment covering 599-608 (AEYKVVDDDK) has biased composition (basic and acidic residues).

It belongs to the heat shock protein 70 family.

Acts as a chaperone. This chain is Chaperone protein DnaK, found in Acetivibrio thermocellus (strain ATCC 27405 / DSM 1237 / JCM 9322 / NBRC 103400 / NCIMB 10682 / NRRL B-4536 / VPI 7372) (Clostridium thermocellum).